A 205-amino-acid chain; its full sequence is UPF0637 protein OB1420 (205 aa).

This sequence belongs to the UPF0637 family.

This chain is UPF0637 protein OB1420, found in Oceanobacillus iheyensis (strain DSM 14371 / CIP 107618 / JCM 11309 / KCTC 3954 / HTE831).